The following is a 347-amino-acid chain: S-adenosylmethionine:tRNA ribosyltransferase-isomerase (347 aa).

This sequence belongs to the QueA family. Monomer.

The protein localises to the cytoplasm. It catalyses the reaction 7-aminomethyl-7-carbaguanosine(34) in tRNA + S-adenosyl-L-methionine = epoxyqueuosine(34) in tRNA + adenine + L-methionine + 2 H(+). It functions in the pathway tRNA modification; tRNA-queuosine biosynthesis. In terms of biological role, transfers and isomerizes the ribose moiety from AdoMet to the 7-aminomethyl group of 7-deazaguanine (preQ1-tRNA) to give epoxyqueuosine (oQ-tRNA). This Pseudomonas paraeruginosa (strain DSM 24068 / PA7) (Pseudomonas aeruginosa (strain PA7)) protein is S-adenosylmethionine:tRNA ribosyltransferase-isomerase.